The primary structure comprises 122 residues: Flagellar protein FliT (122 aa).

Positions 1-50 (MERQQQLLAAYQQIHSLSSQMIALAQTERWEDLVELELAYVTAVESTAAF) are required for homodimerization. The fliD binding stretch occupies residues 60-98 (LQELLRNKLQQILDNETELKRLLQQRMDQLKELIGQSTR).

It belongs to the FliT family. In terms of assembly, homodimer. Interacts with FliD and FlhC.

The protein localises to the cytoplasm. The protein resides in the cytosol. Its function is as follows. Dual-function protein that regulates the transcription of class 2 flagellar operons and that also acts as an export chaperone for the filament-capping protein FliD. As a transcriptional regulator, acts as an anti-FlhDC factor; it directly binds FlhC, thus inhibiting the binding of the FlhC/FlhD complex to class 2 promoters, resulting in decreased expression of class 2 flagellar operons. As a chaperone, effects FliD transition to the membrane by preventing its premature polymerization, and by directing it to the export apparatus. This is Flagellar protein FliT from Serratia proteamaculans (strain 568).